The primary structure comprises 328 residues: MVIIGGGPIGLYATFYAGLRDMRALVIDAQDELGGQLVTLYPEKVVYDVGGYPGILAYDLAQNLIEQAKMFSPDIRINEWADMIERTPDNMWIIKTDKGGAFKTKTILIAAGIGKIIPSRLNAKGEIEYENKGVYYTVRRKRDFEGKRILIVGGGDSAVDWALTLSPVAKSVTLIHRRDQFRAHERSVKQMFQVATVYTWHELKEVKGDGSKVTQAVIFDNRTKEEKTLDVDAVIISIGHKGDLGNMVKWGLNMKGRSITVNGKMETNLAGVYAAGDIVEQEGTPKLALIATGFAQAAIAVSVAKKYIDPNASVFAGHSSEMDNKFKK.

Residues Asp-28, Gln-36, Tyr-41, Ala-81, Ile-116, Asp-277, and Ser-320 each contribute to the FAD site.

It belongs to the ferredoxin--NADP reductase type 2 family. Homodimer. It depends on FAD as a cofactor.

The catalysed reaction is 2 reduced [2Fe-2S]-[ferredoxin] + NADP(+) + H(+) = 2 oxidized [2Fe-2S]-[ferredoxin] + NADPH. In Sulfolobus acidocaldarius (strain ATCC 33909 / DSM 639 / JCM 8929 / NBRC 15157 / NCIMB 11770), this protein is Ferredoxin--NADP reductase 1.